Here is a 198-residue protein sequence, read N- to C-terminus: Outer-membrane lipoprotein carrier protein (198 aa).

The N-terminal stretch at Met1–Ala17 is a signal peptide.

This sequence belongs to the LolA family. Monomer.

Its subcellular location is the periplasm. Its function is as follows. Participates in the translocation of lipoproteins from the inner membrane to the outer membrane. Only forms a complex with a lipoprotein if the residue after the N-terminal Cys is not an aspartate (The Asp acts as a targeting signal to indicate that the lipoprotein should stay in the inner membrane). The polypeptide is Outer-membrane lipoprotein carrier protein (Aliivibrio fischeri (strain MJ11) (Vibrio fischeri)).